The sequence spans 345 residues: Phosphoribosylformylglycinamidine cyclo-ligase (345 aa).

It belongs to the AIR synthase family.

The protein localises to the cytoplasm. The catalysed reaction is 2-formamido-N(1)-(5-O-phospho-beta-D-ribosyl)acetamidine + ATP = 5-amino-1-(5-phospho-beta-D-ribosyl)imidazole + ADP + phosphate + H(+). Its pathway is purine metabolism; IMP biosynthesis via de novo pathway; 5-amino-1-(5-phospho-D-ribosyl)imidazole from N(2)-formyl-N(1)-(5-phospho-D-ribosyl)glycinamide: step 2/2. This chain is Phosphoribosylformylglycinamidine cyclo-ligase, found in Bifidobacterium longum (strain DJO10A).